Here is a 639-residue protein sequence, read N- to C-terminus: tRNA uridine 5-carboxymethylaminomethyl modification enzyme MnmG (639 aa).

Gly15–Gly20 contacts FAD. Gly276–Phe290 contacts NAD(+).

This sequence belongs to the MnmG family. As to quaternary structure, homodimer. Heterotetramer of two MnmE and two MnmG subunits. FAD is required as a cofactor.

The protein localises to the cytoplasm. NAD-binding protein involved in the addition of a carboxymethylaminomethyl (cmnm) group at the wobble position (U34) of certain tRNAs, forming tRNA-cmnm(5)s(2)U34. This chain is tRNA uridine 5-carboxymethylaminomethyl modification enzyme MnmG, found in Streptococcus gordonii (strain Challis / ATCC 35105 / BCRC 15272 / CH1 / DL1 / V288).